We begin with the raw amino-acid sequence, 203 residues long: V-type ATP synthase subunit D (203 aa).

It belongs to the V-ATPase D subunit family.

Produces ATP from ADP in the presence of a proton gradient across the membrane. This chain is V-type ATP synthase subunit D, found in Thermotoga neapolitana (strain ATCC 49049 / DSM 4359 / NBRC 107923 / NS-E).